The sequence spans 358 residues: HTH-type transcriptional regulator IpsA (358 aa).

Positions 8-63 constitute an HTH lacI-type domain; it reads GTLASIAAKLGISRTTVSNAYNRPEQLSAELRQRILDTAEDMGYLGPDPVARSLRT. Residues 10-29 constitute a DNA-binding region (H-T-H motif); it reads LASIAAKLGISRTTVSNAYN.

As to quaternary structure, homodimer.

Myo-inositol causes the dissociation of the IpsA-DNA complex in vitro. In terms of biological role, plays a role in the regulation of cell wall biogenesis. Inositol-dependent transcriptional activator of ino1, which encodes inositol phosphate synthase. Also regulates other target genes, which are most likely involved in the synthesis of inositol-derived cell wall components and mycothiol. Acts by binding to a conserved palindromic motif within the promoter regions. The chain is HTH-type transcriptional regulator IpsA from Corynebacterium glutamicum (strain ATCC 13032 / DSM 20300 / JCM 1318 / BCRC 11384 / CCUG 27702 / LMG 3730 / NBRC 12168 / NCIMB 10025 / NRRL B-2784 / 534).